A 189-amino-acid polypeptide reads, in one-letter code: Photosystem I assembly protein Ycf4 (189 aa).

2 helical membrane passes run 25 to 45 (SVYF…LAGL) and 62 to 82 (LVFI…SLAG).

This sequence belongs to the Ycf4 family.

The protein localises to the cellular thylakoid membrane. Functionally, seems to be required for the assembly of the photosystem I complex. This is Photosystem I assembly protein Ycf4 from Synechococcus sp. (strain JA-2-3B'a(2-13)) (Cyanobacteria bacterium Yellowstone B-Prime).